The sequence spans 465 residues: Sodium-coupled neutral amino acid transporter 7 (465 aa).

The next 11 helical transmembrane spans lie at 54–74 (AVFI…PAAF), 82–102 (AGVT…VILA), 128–148 (ICEL…LIII), 177–197 (FTIT…KEIG), 204–224 (TLSV…YIWP), 244–264 (FNAM…VPVF), 275–295 (WWGV…GTGV), 318–338 (VAVA…YPIL), 370–390 (ILQT…IPDI), 394–414 (ISLI…LCLI), and 427–447 (SWNA…FIFG).

Belongs to the amino acid/polyamine transporter 2 family.

The protein resides in the lysosome membrane. Its subcellular location is the cell projection. It is found in the axon. The catalysed reaction is L-asparagine(in) + Na(+)(in) = L-asparagine(out) + Na(+)(out). It carries out the reaction L-glutamine(in) + Na(+)(in) = L-glutamine(out) + Na(+)(out). Its function is as follows. Symporter that selectively cotransports sodium ions and amino acids, such as L-glutamine and L-asparagine from the lysosome into the cytoplasm and may participates in mTORC1 activation. The transport activity requires an acidic lysosomal lumen. This chain is Sodium-coupled neutral amino acid transporter 7, found in Danio rerio (Zebrafish).